We begin with the raw amino-acid sequence, 323 residues long: MLEQGYHLYEAVQFLAIHAPSSAQKKMNAMLMDLRSGYPLHKALDHLQLPQDVQLLLYVSERNGDLAQGFRKSGELFKKREEMKRKWEGAMRYPLLLIIVTLLLMFILMYFVLPHHQTLYRSLQIELPVITKLVIACSEKLPWLFTAFFVVAILLVLTYFVTFHRFPPTKKVTVLLRIPGLSQWTKEVITCLFCLTLGGLLKGGLSIMEALSICKEQDFFLFFRSEGEEMMLELENGERLYECLRRRPHYLKELPFVVENGEKTGNLAKDLLYFSDYQLEEFERRVKKWLVAIQPIVFSMIGAVILVLFLAMMLPVFQMIGAI.

4 helical membrane-spanning segments follow: residues 93–113 (YPLLLIIVTLLLMFILMYFVL), 141–161 (LPWLFTAFFVVAILLVLTYFV), 188–208 (VITCLFCLTLGGLLKGGLSIM), and 296–316 (IVFSMIGAVILVLFLAMMLPV).

It belongs to the GSP F family.

Its subcellular location is the cell membrane. Functionally, required for transformation and DNA binding. The protein is ComG operon protein 2 homolog (comGB) of Halalkalibacterium halodurans (strain ATCC BAA-125 / DSM 18197 / FERM 7344 / JCM 9153 / C-125) (Bacillus halodurans).